Reading from the N-terminus, the 249-residue chain is Vacuolar iron transporter 1 (249 aa).

Topologically, residues 1–36 are cytoplasmic; the sequence is MADGANDGGNPGAEEQQRLLDQHKEAHFTAGEIVRD. The helical transmembrane segment at 37-57 threads the bilayer; sequence IIIGVSDGLTVPFALAAGLSG. The Vacuolar segment spans residues 58–63; the sequence is ANASSS. Residues 64 to 84 form a helical membrane-spanning segment; that stretch reads IVLTAGIAEVAAGAISMGLGG. The Cytoplasmic segment spans residues 85–170; sequence YLAAKSEADN…PKRALQSAFT (86 aa). The segment at 90–165 is cytoplasmic metal binding domain (MBD); it reads SEADNYAREL…LEKPDPKRAL (76 aa). Glu-102, Glu-105, Glu-113, Glu-116, Met-149, and Glu-153 together coordinate Fe cation. The chain crosses the membrane as a helical span at residues 171–191; the sequence is IAIAYVLGGLVPLIPYMFIPV. Residues 192-194 are Vacuolar-facing; that stretch reads ARK. Residues 195-215 traverse the membrane as a helical segment; the sequence is AVVASVILTLMALLIFGYAKG. Residues 216–226 are Cytoplasmic-facing; sequence YFTDNKPFKSA. Residues 227-247 form a helical membrane-spanning segment; sequence LQTALIGAIASAAAFGMAKAV. The Vacuolar segment spans residues 248–249; sequence QS.

The protein belongs to the CCC1 family. Homodimer. The dimeric interaction is mediated by both the transmembrane domains (TMDs) and the cytoplasmic metal binding domain (MBD).

The protein resides in the vacuole membrane. It carries out the reaction Fe(2+)(in) = Fe(2+)(out). Its activity is regulated as follows. Transport of iron ions is inhibited by zinc ions. Its function is as follows. Vacuolar iron transporter involved in the transfer of iron ions from the cytosol to the vacuole for intracellular iron storage. Can transport cobalt ions from the cytosol to the vacuole. The chain is Vacuolar iron transporter 1 from Eucalyptus grandis (Flooded gum).